The following is an 82-amino-acid chain: ATP synthase subunit c (82 aa).

2 helical membrane-spanning segments follow: residues 5–25 and 55–75; these read MSLVAGLIAIGAGIAVGFGAI and FLIIALAFMETLTIYGLVIAF.

Belongs to the ATPase C chain family. F-type ATPases have 2 components, F(1) - the catalytic core - and F(0) - the membrane proton channel. F(1) has five subunits: alpha(3), beta(3), gamma(1), delta(1), epsilon(1). F(0) has three main subunits: a(1), b(2) and c(10-14). The alpha and beta chains form an alternating ring which encloses part of the gamma chain. F(1) is attached to F(0) by a central stalk formed by the gamma and epsilon chains, while a peripheral stalk is formed by the delta and b chains.

The protein resides in the cell membrane. Functionally, f(1)F(0) ATP synthase produces ATP from ADP in the presence of a proton or sodium gradient. F-type ATPases consist of two structural domains, F(1) containing the extramembraneous catalytic core and F(0) containing the membrane proton channel, linked together by a central stalk and a peripheral stalk. During catalysis, ATP synthesis in the catalytic domain of F(1) is coupled via a rotary mechanism of the central stalk subunits to proton translocation. In terms of biological role, key component of the F(0) channel; it plays a direct role in translocation across the membrane. A homomeric c-ring of between 10-14 subunits forms the central stalk rotor element with the F(1) delta and epsilon subunits. The chain is ATP synthase subunit c from Carboxydothermus hydrogenoformans (strain ATCC BAA-161 / DSM 6008 / Z-2901).